A 252-amino-acid chain; its full sequence is tRNA1(Val) (adenine(37)-N6)-methyltransferase (252 aa).

The protein belongs to the methyltransferase superfamily. tRNA (adenine-N(6)-)-methyltransferase family.

It is found in the cytoplasm. The enzyme catalyses adenosine(37) in tRNA1(Val) + S-adenosyl-L-methionine = N(6)-methyladenosine(37) in tRNA1(Val) + S-adenosyl-L-homocysteine + H(+). Its function is as follows. Specifically methylates the adenine in position 37 of tRNA(1)(Val) (anticodon cmo5UAC). The polypeptide is tRNA1(Val) (adenine(37)-N6)-methyltransferase (Proteus mirabilis (strain HI4320)).